A 417-amino-acid chain; its full sequence is Phosphoglycerate kinase 2 (417 aa).

N-acetylserine is present on Ser2. A phosphoserine mark is found at Ser2 and Ser4. At Lys11 the chain carries N6-acetyllysine. (2R)-3-phosphoglycerate contacts are provided by Val23, Asp24, Phe25, Asn26, Gln38, Arg39, Ser62, His63, Gly65, and Arg66. N6-acetyllysine is present on residues Lys75, Lys86, and Lys97. 2 residues coordinate (2R)-3-phosphoglycerate: Leu122 and Arg123. N6-acetyllysine occurs at positions 131 and 146. (2R)-3-phosphoglycerate is bound by residues His170 and Arg171. At Tyr196 the chain carries Phosphotyrosine. N6-acetyllysine is present on Lys199. Gly214 contacts ADP. Position 214 (Gly214) interacts with CDP. Residues Ala215 and Lys216 each coordinate AMP. An ATP-binding site is contributed by Ala215. A Mg(2+)-binding site is contributed by Ala215. Residues Ala218 and Asp219 each coordinate Mg(2+). CDP is bound at residue Asp219. Lys220 contacts AMP. Lys220 is an ATP binding site. Residue Gly238 participates in ADP binding. Gly238 lines the CDP pocket. Position 239 (Gly239) interacts with AMP. Gly239 lines the ATP pocket. N6-acetyllysine occurs at positions 267 and 291. Ala313 is a binding site for AMP. Ala313 serves as a coordination point for ATP. CDP is bound by residues Gly338 and Phe343. Phe343 lines the ADP pocket. An AMP-binding site is contributed by Glu344. ATP-binding residues include Glu344, Asp375, and Thr376. Asp375 contacts Mg(2+).

This sequence belongs to the phosphoglycerate kinase family. In terms of assembly, monomer. The cofactor is Mg(2+). In terms of tissue distribution, testis specific.

It is found in the cytoplasm. The catalysed reaction is (2R)-3-phosphoglycerate + ATP = (2R)-3-phospho-glyceroyl phosphate + ADP. It functions in the pathway carbohydrate degradation; glycolysis; pyruvate from D-glyceraldehyde 3-phosphate: step 2/5. Functionally, essential for sperm motility and male fertility but is not required for the completion of spermatogenesis. The chain is Phosphoglycerate kinase 2 from Sus scrofa (Pig).